Reading from the N-terminus, the 477-residue chain is Glycogen synthase (477 aa).

Lys-15 contributes to the ADP-alpha-D-glucose binding site.

The protein belongs to the glycosyltransferase 1 family. Bacterial/plant glycogen synthase subfamily.

The catalysed reaction is [(1-&gt;4)-alpha-D-glucosyl](n) + ADP-alpha-D-glucose = [(1-&gt;4)-alpha-D-glucosyl](n+1) + ADP + H(+). It functions in the pathway glycan biosynthesis; glycogen biosynthesis. In terms of biological role, synthesizes alpha-1,4-glucan chains using ADP-glucose. In Cronobacter sakazakii (strain ATCC BAA-894) (Enterobacter sakazakii), this protein is Glycogen synthase.